Consider the following 401-residue polypeptide: Collagen and calcium-binding EGF domain-containing protein 1 (401 aa).

The signal sequence occupies residues 1 to 22; sequence MIYPGRGASLSVAVALVLFSSG. Residues 126-167 enclose the EGF-like; calcium-binding domain; sequence DIDECANNNETVCSQMCVNTPGSYRCDCHSGFYLEDDGKTCT. 3 disulfides stabilise this stretch: C130–C142, C138–C151, and C153–C166. Residue N134 is glycosylated (N-linked (GlcNAc...) asparagine). Disordered stretches follow at residues 229–321 and 344–401; these read TTNS…PGSF and SRPL…DWPV. 2 Collagen-like domains span residues 234–276 and 286–319; these read LPGP…PIGP and GRRGPVGPPGAPGRDGMKGERGFPGPSGPPGPPG. Pro residues predominate over residues 235-244; sequence PGPPGPPGPA. Residues 246–258 are compositionally biased toward low complexity; sequence TPGAKGSSGSPGQ.

This sequence belongs to the CCBE1 family. As to expression, not expressed in blood or lymphatic endothelial cells, correlating spatially and temporally with the migration routes of endothelial cells that bud from the PCV, migrate in association with somite boundaries and seed the horizontal myoseptum region from where lymphatic precursors later migrate.

The protein resides in the secreted. Required for lymphangioblast budding and angiogenic sprouting from venous endothelium during embryogenesis. Required for the formation of facial lymphatic structures. Necessary for lymphangiogenesis, but is probably not part of either the vegfc-vegfr3 signaling or sox18-prox1 transcriptional pathways. The protein is Collagen and calcium-binding EGF domain-containing protein 1 (ccbe1) of Danio rerio (Zebrafish).